The following is a 212-amino-acid chain: Kynurenine formamidase (212 aa).

Residue Trp17 participates in substrate binding. Zn(2+) contacts are provided by His48, His52, and Asp54. The active-site Proton donor/acceptor is His58. The Zn(2+) site is built by His161 and Glu173.

The protein belongs to the Cyclase 1 superfamily. KynB family. Homodimer. Requires Zn(2+) as cofactor.

It carries out the reaction N-formyl-L-kynurenine + H2O = L-kynurenine + formate + H(+). Its pathway is amino-acid degradation; L-tryptophan degradation via kynurenine pathway; L-kynurenine from L-tryptophan: step 2/2. Catalyzes the hydrolysis of N-formyl-L-kynurenine to L-kynurenine, the second step in the kynurenine pathway of tryptophan degradation. This Salinibacter ruber (strain DSM 13855 / M31) protein is Kynurenine formamidase.